The chain runs to 100 residues: Ribosomal processing cysteine protease Prp (100 aa).

The active-site Proton donor is histidine 16. Catalysis depends on cysteine 28, which acts as the Nucleophile.

This sequence belongs to the Prp family. As to quaternary structure, homodimer.

In terms of biological role, an essential cysteine protease that cleaves the N-terminus from ribosomal protein bL27. The sequence is that of Ribosomal processing cysteine protease Prp from Mycoplasma pneumoniae (strain ATCC 29342 / M129 / Subtype 1) (Mycoplasmoides pneumoniae).